The following is a 308-amino-acid chain: MLCLQESGDCLRDQMRYMMRSLQDLKHLRRSCVAPPVGPPVRLRACKQLIAQRERRARLRISDASEASSYDSACCLSSSLEEEESASDPSAVSSPSSERSLEFDSGYSEASWQDEGVVLRRTKNIRVSSTACLRTNQLSNTRARPKSTSDACLESWTSFETASDPEDWTTSLLTRGRNRQPLVLGDNSFADLIHNWMDLPECPEQTELKHSSGRSFAKDFLVNIKRRIAGFSRSADGRRKSSDVTKLSKSIVPTKRLSCQIDVQHKMPFFYKSHTGLNELDTDYYQFSALMKSGSRTPIVCNDIIGYI.

The tract at residues 81 to 105 is disordered; it reads EEEESASDPSAVSSPSSERSLEFDS. The span at 87 to 98 shows a compositional bias: low complexity; sequence SDPSAVSSPSSE. Inka box stretches follow at residues 164 to 201 and 281 to 308; these read DPED…DLPE and DTDY…IGYI.

It belongs to the INKA family. In terms of assembly, interacts with pak4/pak5.

Its subcellular location is the nucleus. It localises to the cytoplasm. Its function is as follows. Inhibitor of the serine/threonine-protein kinase pak4/pak5. Acts by binding pak4/pak5 in a substrate-like manner, inhibiting the protein kinase activity. Required for the proper migration of neural crest cells during embryonic development, probably by inhibiting pak4/pak5. In Danio rerio (Zebrafish), this protein is PAK4-inhibitor inka1.